The chain runs to 1318 residues: DNA-directed RNA polymerase subunit beta' (1318 aa).

Cysteine 221, cysteine 295, cysteine 302, and cysteine 305 together coordinate Zn(2+).

Belongs to the RNA polymerase beta' chain family. RpoC2 subfamily. As to quaternary structure, in cyanobacteria the RNAP catalytic core is composed of 2 alpha, 1 beta, 1 beta', 1 gamma and 1 omega subunit. When a sigma factor is associated with the core the holoenzyme is formed, which can initiate transcription. The cofactor is Zn(2+).

The catalysed reaction is RNA(n) + a ribonucleoside 5'-triphosphate = RNA(n+1) + diphosphate. Its function is as follows. DNA-dependent RNA polymerase catalyzes the transcription of DNA into RNA using the four ribonucleoside triphosphates as substrates. The chain is DNA-directed RNA polymerase subunit beta' from Synechococcus sp. (strain ATCC 27144 / PCC 6301 / SAUG 1402/1) (Anacystis nidulans).